We begin with the raw amino-acid sequence, 197 residues long: Pyridoxal 5'-phosphate synthase subunit PdxT (197 aa).

Residue Gly-53–Ser-55 participates in L-glutamine binding. Cys-85 acts as the Nucleophile in catalysis. L-glutamine is bound by residues Arg-114 and Ile-142–Arg-143. Residues His-179 and Glu-181 each act as charge relay system in the active site.

It belongs to the glutaminase PdxT/SNO family. As to quaternary structure, in the presence of PdxS, forms a dodecamer of heterodimers. Only shows activity in the heterodimer.

The catalysed reaction is aldehydo-D-ribose 5-phosphate + D-glyceraldehyde 3-phosphate + L-glutamine = pyridoxal 5'-phosphate + L-glutamate + phosphate + 3 H2O + H(+). It catalyses the reaction L-glutamine + H2O = L-glutamate + NH4(+). Its pathway is cofactor biosynthesis; pyridoxal 5'-phosphate biosynthesis. Its function is as follows. Catalyzes the hydrolysis of glutamine to glutamate and ammonia as part of the biosynthesis of pyridoxal 5'-phosphate. The resulting ammonia molecule is channeled to the active site of PdxS. The protein is Pyridoxal 5'-phosphate synthase subunit PdxT of Thermococcus kodakarensis (strain ATCC BAA-918 / JCM 12380 / KOD1) (Pyrococcus kodakaraensis (strain KOD1)).